Here is a 423-residue protein sequence, read N- to C-terminus: uncharacterized protein (423 aa).

A BON domain is found at 75–145; the sequence is LHVVVTQPIA…PIVNNIKVAG (71 aa).

Belongs to the bacterial secretin family.

In terms of biological role, involved in the secretion of an unknown compound. This is an uncharacterized protein from Sinorhizobium fredii (strain NBRC 101917 / NGR234).